Reading from the N-terminus, the 237-residue chain is GCN5-related N-acetyltransferase 3, chloroplastic (237 aa).

The transit peptide at 1 to 93 (MGLVGCVGKS…RAISRSDVIV (93 aa)) directs the protein to the chloroplast. The N-acetyltransferase domain maps to 94–237 (SVFCKPQHVD…TMMFTKSLEA (144 aa)). Acetyl-CoA-binding positions include 171–173 (LMV), 179–184 (RMGIGK), 207–209 (FED), and F214.

It belongs to the acetyltransferase family. GNAT subfamily. Oligomer. Post-translationally, autoacetylated. As to expression, expressed in green tissues.

Its subcellular location is the plastid. The protein localises to the chloroplast. It carries out the reaction an N-terminal L-alpha-aminoacyl-[protein] + acetyl-CoA = N-terminal N(alpha)-acetyl-L-alpha-aminoacyl-[protein] + CoA + H(+). The catalysed reaction is L-lysyl-[protein] + acetyl-CoA = N(6)-acetyl-L-lysyl-[protein] + CoA + H(+). Functionally, protein acetyltransferase with dual specificity triggering both N-alpha-acetylation (NTA) and epsilon-lysine acetylation (KA), possibly with a low efficiency or toward specific plastid substrates. The protein is GCN5-related N-acetyltransferase 3, chloroplastic of Arabidopsis thaliana (Mouse-ear cress).